Here is a 483-residue protein sequence, read N- to C-terminus: FAD-linked oxidoreductase pgmH (483 aa).

Residues 54–215 (SIRLATLVVY…TEFKYRVHKQ (162 aa)) enclose the FAD-binding PCMH-type domain.

This sequence belongs to the oxygen-dependent FAD-linked oxidoreductase family. FAD is required as a cofactor.

Its pathway is pigment biosynthesis. The protein operates within secondary metabolite biosynthesis. In terms of biological role, FAD-linked oxidoreductase; part of the gene cluster that mediates the biosynthesis of pleosporalin A, ascomycone A, as well as a third cryptic naphthoquinone derived pigment, all responsible for the coloration of conidia. Essential for the production of pleosporalin A, but not the 2 other final products. The pathway begins with the biosynthesis of the cyclized heptaketide 3-acetonyl-1,6,8-trihydroxy-2-naphthaldehyde by the NR-PKS pgmA. The C-6 hydroxyl group is further methylated by the O-methyltransferase pgmB to yield fusarubinaldehyde which is in turn oxidized by the cytochrome P450 monooxygenase pgmC at C-9. The C-1 hydroxyl group is then methylated spontaneously. Although pgmE, pgmD and pgmH are essential for the production of pleosporalin A, it is not the case for the 2 other final products and it remains difficult to assign a specific function to each enzyme. PgmF and pgmG seem not to be involved in pigment biosynthesis although they were regulated by the cluster-specific transcription factor pgmR. This Aspergillus terreus (strain NIH 2624 / FGSC A1156) protein is FAD-linked oxidoreductase pgmH.